A 149-amino-acid chain; its full sequence is Ribosome-binding factor A (149 aa).

Basic and acidic residues predominate over residues 116–125; that stretch reads TLFEELHPNP. Positions 116 to 149 are disordered; sequence TLFEELHPNPEEDDGDTDAETLLEDSESGIERET. Over residues 126 to 143 the composition is skewed to acidic residues; that stretch reads EEDDGDTDAETLLEDSES.

The protein belongs to the RbfA family. In terms of assembly, monomer. Binds 30S ribosomal subunits, but not 50S ribosomal subunits or 70S ribosomes.

The protein localises to the cytoplasm. Functionally, one of several proteins that assist in the late maturation steps of the functional core of the 30S ribosomal subunit. Associates with free 30S ribosomal subunits (but not with 30S subunits that are part of 70S ribosomes or polysomes). Required for efficient processing of 16S rRNA. May interact with the 5'-terminal helix region of 16S rRNA. This is Ribosome-binding factor A from Leptospira biflexa serovar Patoc (strain Patoc 1 / Ames).